The primary structure comprises 129 residues: Sulfurtransferase TusD (129 aa).

Residue Cys79 is the Cysteine persulfide intermediate of the active site.

Belongs to the DsrE/TusD family. In terms of assembly, heterohexamer, formed by a dimer of trimers. The hexameric TusBCD complex contains 2 copies each of TusB, TusC and TusD. The TusBCD complex interacts with TusE.

The protein localises to the cytoplasm. Functionally, part of a sulfur-relay system required for 2-thiolation of 5-methylaminomethyl-2-thiouridine (mnm(5)s(2)U) at tRNA wobble positions. Accepts sulfur from TusA and transfers it in turn to TusE. This is Sulfurtransferase TusD from Serratia proteamaculans (strain 568).